The following is a 316-amino-acid chain: Protein lifeguard 2 (316 aa).

The tract at residues 1–53 (MTQGKLSVANKAPGTEGQQQVHGEKKEAPAVPSAPPSYEEATSGEGMKAGAFP) is disordered. 3 helical membrane-spanning segments follow: residues 106 to 126 (VYTI…LFTF), 138 to 158 (PGWY…LACC), and 165 to 185 (FPWN…LTGM). Residue Asn191 is glycosylated (N-linked (GlcNAc...) asparagine). 4 helical membrane-spanning segments follow: residues 194–214 (SVLL…VFSF), 225–245 (GVLF…AILL), 250–270 (VPWL…LFLA), and 290–310 (IFGA…FLQL).

It belongs to the BI1 family. LFG subfamily. As to quaternary structure, interacts with FAS/TNFRSF6 and BAX.

It is found in the cell membrane. The protein localises to the membrane raft. The protein resides in the postsynaptic cell membrane. In terms of biological role, antiapoptotic protein which protects cells uniquely from Fas-induced apoptosis. Regulates Fas-mediated apoptosis in neurons by interfering with caspase-8 activation. Plays a role in cerebellar development by affecting cerebellar size, internal granular layer (IGL) thickness, and Purkinje cell (PC) development. The protein is Protein lifeguard 2 (FAIM2) of Pongo abelii (Sumatran orangutan).